A 579-amino-acid polypeptide reads, in one-letter code: Type IV pilus assembly ATPase PilB (579 aa).

340-345 (GSGKTV) is an ATP binding site. Zn(2+) is bound by residues Cys470, Cys473, Cys507, and Cys510.

It belongs to the GSP E family. In terms of assembly, interacts with CpiA.

The protein resides in the cytoplasm. With respect to regulation, inhibited by the inhibitory protein CpiA. ATPase component of the type IV pilus (T4P). Acts as a molecular motor to provide the energy that is required for biogenesis of the pilus and the extrusion of substrates generated in the cytoplasm. PilB is required for optimal T4P extension and, consequently, efficient natural transformation. May promote processive T4P extension. The sequence is that of Type IV pilus assembly ATPase PilB from Acinetobacter baylyi (strain ATCC 33305 / BD413 / ADP1).